Consider the following 844-residue polypeptide: DNA mismatch repair protein MutS (844 aa).

ATP is bound at residue 602–609 (GPNMSGKS).

It belongs to the DNA mismatch repair MutS family.

Its function is as follows. This protein is involved in the repair of mismatches in DNA. It is possible that it carries out the mismatch recognition step. This protein has a weak ATPase activity. This chain is DNA mismatch repair protein MutS, found in Streptococcus pneumoniae serotype 19F (strain G54).